The sequence spans 243 residues: Proteasome subunit alpha (243 aa).

It belongs to the peptidase T1A family. The 20S proteasome core is composed of 14 alpha and 14 beta subunits that assemble into four stacked heptameric rings, resulting in a barrel-shaped structure. The two inner rings, each composed of seven catalytic beta subunits, are sandwiched by two outer rings, each composed of seven alpha subunits. The catalytic chamber with the active sites is on the inside of the barrel. Has a gated structure, the ends of the cylinder being occluded by the N-termini of the alpha-subunits. Is capped at one or both ends by the proteasome regulatory ATPase, PAN.

It is found in the cytoplasm. The formation of the proteasomal ATPase PAN-20S proteasome complex, via the docking of the C-termini of PAN into the intersubunit pockets in the alpha-rings, triggers opening of the gate for substrate entry. Interconversion between the open-gate and close-gate conformations leads to a dynamic regulation of the 20S proteasome proteolysis activity. Its function is as follows. Component of the proteasome core, a large protease complex with broad specificity involved in protein degradation. This chain is Proteasome subunit alpha, found in Pyrobaculum aerophilum (strain ATCC 51768 / DSM 7523 / JCM 9630 / CIP 104966 / NBRC 100827 / IM2).